A 149-amino-acid polypeptide reads, in one-letter code: UPF0179 protein TON_1048 (149 aa).

The protein belongs to the UPF0179 family.

The polypeptide is UPF0179 protein TON_1048 (Thermococcus onnurineus (strain NA1)).